The primary structure comprises 254 residues: Phosphatidylglycerol--prolipoprotein diacylglyceryl transferase (254 aa).

The next 4 helical transmembrane spans lie at 11-31 (LAIRWYGVVISIGAALGLLLA), 49-69 (FLIAFPSAIIGARLYYVIFEF), 84-104 (QGGLAIHGGIIFGVLAVYIYL), and 109-129 (ESFFEYVDVAAPSIILGQAIG). R130 serves as a coordination point for a 1,2-diacyl-sn-glycero-3-phospho-(1'-sn-glycerol). 3 helical membrane passes run 169 to 189 (PTFLYESIWNFIVCIFLVYLL), 196 to 216 (GIVFMAYIGLYSLGRFFIEGL), and 228 to 248 (VAQLISVLGIILSIFFIYNII).

The protein belongs to the Lgt family.

It is found in the cell membrane. It catalyses the reaction L-cysteinyl-[prolipoprotein] + a 1,2-diacyl-sn-glycero-3-phospho-(1'-sn-glycerol) = an S-1,2-diacyl-sn-glyceryl-L-cysteinyl-[prolipoprotein] + sn-glycerol 1-phosphate + H(+). Its pathway is protein modification; lipoprotein biosynthesis (diacylglyceryl transfer). Its function is as follows. Catalyzes the transfer of the diacylglyceryl group from phosphatidylglycerol to the sulfhydryl group of the N-terminal cysteine of a prolipoprotein, the first step in the formation of mature lipoproteins. The sequence is that of Phosphatidylglycerol--prolipoprotein diacylglyceryl transferase from Clostridium botulinum (strain Langeland / NCTC 10281 / Type F).